A 462-amino-acid chain; its full sequence is ATP synthase subunit beta 1 (462 aa).

Gly-152–Thr-159 contacts ATP.

Belongs to the ATPase alpha/beta chains family. As to quaternary structure, F-type ATPases have 2 components, CF(1) - the catalytic core - and CF(0) - the membrane proton channel. CF(1) has five subunits: alpha(3), beta(3), gamma(1), delta(1), epsilon(1). CF(0) has four main subunits: a(1), b(1), b'(1) and c(9-12).

The protein resides in the cell inner membrane. The catalysed reaction is ATP + H2O + 4 H(+)(in) = ADP + phosphate + 5 H(+)(out). Its function is as follows. Produces ATP from ADP in the presence of a proton gradient across the membrane. The catalytic sites are hosted primarily by the beta subunits. The chain is ATP synthase subunit beta 1 from Dinoroseobacter shibae (strain DSM 16493 / NCIMB 14021 / DFL 12).